A 158-amino-acid chain; its full sequence is Transcription elongation factor GreA (158 aa).

A coiled-coil region spans residues 45-73; that stretch reads AEYHAAREQQSFIEGRIKQLESELSHAEI.

Belongs to the GreA/GreB family.

Necessary for efficient RNA polymerase transcription elongation past template-encoded arresting sites. The arresting sites in DNA have the property of trapping a certain fraction of elongating RNA polymerases that pass through, resulting in locked ternary complexes. Cleavage of the nascent transcript by cleavage factors such as GreA or GreB allows the resumption of elongation from the new 3'terminus. GreA releases sequences of 2 to 3 nucleotides. The polypeptide is Transcription elongation factor GreA (Xanthomonas axonopodis pv. citri (strain 306)).